The following is a 92-amino-acid chain: YcgL domain-containing protein Sputcn32_1766 (92 aa).

The YcgL domain occupies 1–85; that stretch reads MLCTVYKSTR…PQVNLLAEHK (85 aa).

The sequence is that of YcgL domain-containing protein Sputcn32_1766 from Shewanella putrefaciens (strain CN-32 / ATCC BAA-453).